Reading from the N-terminus, the 379-residue chain is Probable RNA 3'-terminal phosphate cyclase-like protein (379 aa).

This sequence belongs to the RNA 3'-terminal cyclase family. Type 2 subfamily. Part of the small subunit (SSU) processome, composed of more than 70 proteins and the RNA chaperone small nucleolar RNA (snoRNA) U3.

The protein resides in the nucleus. It is found in the nucleolus. Functionally, part of the small subunit (SSU) processome, first precursor of the small eukaryotic ribosomal subunit. During the assembly of the SSU processome in the nucleolus, many ribosome biogenesis factors, an RNA chaperone and ribosomal proteins associate with the nascent pre-rRNA and work in concert to generate RNA folding, modifications, rearrangements and cleavage as well as targeted degradation of pre-ribosomal RNA by the RNA exosome. Does not have cyclase activity. The polypeptide is Probable RNA 3'-terminal phosphate cyclase-like protein (Caenorhabditis elegans).